The following is a 352-amino-acid chain: S-adenosylmethionine:tRNA ribosyltransferase-isomerase (352 aa).

It belongs to the QueA family. Monomer.

The protein localises to the cytoplasm. It catalyses the reaction 7-aminomethyl-7-carbaguanosine(34) in tRNA + S-adenosyl-L-methionine = epoxyqueuosine(34) in tRNA + adenine + L-methionine + 2 H(+). The protein operates within tRNA modification; tRNA-queuosine biosynthesis. Transfers and isomerizes the ribose moiety from AdoMet to the 7-aminomethyl group of 7-deazaguanine (preQ1-tRNA) to give epoxyqueuosine (oQ-tRNA). The sequence is that of S-adenosylmethionine:tRNA ribosyltransferase-isomerase from Solibacter usitatus (strain Ellin6076).